We begin with the raw amino-acid sequence, 1088 residues long: RNA-directed RNA polymerase (1088 aa).

Residues 501-687 form the RdRp catalytic domain; sequence LSYGDVTRFL…AKRYIAGGKI (187 aa).

The protein belongs to the reoviridae RNA-directed RNA polymerase family. In terms of assembly, interacts with VP3 (Potential). Interacts with VP2; this interaction activates VP1. Interacts with NSP5; this interaction is probably necessary for the formation of functional virus factories. Interacts with NSP2; this interaction is weak. Mg(2+) is required as a cofactor.

It is found in the virion. The catalysed reaction is RNA(n) + a ribonucleoside 5'-triphosphate = RNA(n+1) + diphosphate. In terms of biological role, RNA-directed RNA polymerase that is involved in both transcription and genome replication. Together with VP3 capping enzyme, forms an enzyme complex positioned near the channels situated at each of the five-fold vertices of the core. Following infection, the outermost layer of the virus is lost, leaving a double-layered particle (DLP) made up of the core and VP6 shell. VP1 then catalyzes the transcription of fully conservative plus-strand genomic RNAs that are extruded through the DLP's channels into the cytoplasm where they function as mRNAs for translation of viral proteins. One copy of each of the viral (+)RNAs is also recruited during core assembly, together with newly synthesized polymerase complexes and VP2. The polymerase of these novo-formed particles catalyzes the synthesis of complementary minus-strands leading to dsRNA formation. To do so, the polymerase specifically recognizes and binds 4 bases 5'-UGUG-3' in the conserved 3'-sequence of plus-strand RNA templates. VP2 presumably activates the autoinhibited VP1-RNA complex to coordinate packaging and genome replication. Once dsRNA synthesis is complete, the polymerase switches to the transcriptional mode, thus providing secondary transcription. The protein is RNA-directed RNA polymerase of Rotavirus A (strain RVA/SA11-Both/G3P5B[2]) (RV-A).